The following is a 103-amino-acid chain: Thrombin inhibitor rhodniin (103 aa).

2 consecutive Kazal-like domains span residues 1 to 50 and 51 to 103; these read EGGE…PCEP and DEDE…PCRT. 6 cysteine pairs are disulfide-bonded: Cys6-Cys31, Cys8-Cys27, Cys16-Cys48, Cys57-Cys84, Cys60-Cys80, and Cys69-Cys101.

It localises to the secreted. Its function is as follows. Thrombin-specific inhibitor. Appears to form 1:1 complexes with thrombin. Prevents blood clotting to allow the insect to feed on blood. The chain is Thrombin inhibitor rhodniin from Rhodnius prolixus (Triatomid bug).